A 1061-amino-acid chain; its full sequence is Carbamoyl phosphate synthase large chain (1061 aa).

The tract at residues methionine 1 to glutamate 401 is carboxyphosphate synthetic domain. ATP-binding residues include arginine 129, arginine 169, glycine 175, glycine 176, lysine 208, isoleucine 210, glutamate 215, glycine 241, isoleucine 242, histidine 243, glutamine 284, and glutamate 298. Positions lysine 133–valine 327 constitute an ATP-grasp 1 domain. Positions 284, 298, and 300 each coordinate Mg(2+). Residues glutamine 284, glutamate 298, and asparagine 300 each coordinate Mn(2+). An oligomerization domain region spans residues isoleucine 402–serine 546. A carbamoyl phosphate synthetic domain region spans residues lysine 547–lysine 929. In terms of domain architecture, ATP-grasp 2 spans aspartate 671–leucine 861. ATP contacts are provided by arginine 707, alanine 746, leucine 748, glutamate 752, glycine 777, valine 778, histidine 779, serine 780, glutamine 820, and glutamate 832. Glutamine 820, glutamate 832, and asparagine 834 together coordinate Mg(2+). Residues glutamine 820, glutamate 832, and asparagine 834 each coordinate Mn(2+). The region spanning methionine 930–leucine 1061 is the MGS-like domain. The interval methionine 930–leucine 1061 is allosteric domain.

Belongs to the CarB family. In terms of assembly, composed of two chains; the small (or glutamine) chain promotes the hydrolysis of glutamine to ammonia, which is used by the large (or ammonia) chain to synthesize carbamoyl phosphate. Tetramer of heterodimers (alpha,beta)4. It depends on Mg(2+) as a cofactor. Mn(2+) serves as cofactor.

It carries out the reaction hydrogencarbonate + L-glutamine + 2 ATP + H2O = carbamoyl phosphate + L-glutamate + 2 ADP + phosphate + 2 H(+). The enzyme catalyses hydrogencarbonate + NH4(+) + 2 ATP = carbamoyl phosphate + 2 ADP + phosphate + 2 H(+). It functions in the pathway amino-acid biosynthesis; L-arginine biosynthesis; carbamoyl phosphate from bicarbonate: step 1/1. It participates in pyrimidine metabolism; UMP biosynthesis via de novo pathway; (S)-dihydroorotate from bicarbonate: step 1/3. In terms of biological role, large subunit of the glutamine-dependent carbamoyl phosphate synthetase (CPSase). CPSase catalyzes the formation of carbamoyl phosphate from the ammonia moiety of glutamine, carbonate, and phosphate donated by ATP, constituting the first step of 2 biosynthetic pathways, one leading to arginine and/or urea and the other to pyrimidine nucleotides. The large subunit (synthetase) binds the substrates ammonia (free or transferred from glutamine from the small subunit), hydrogencarbonate and ATP and carries out an ATP-coupled ligase reaction, activating hydrogencarbonate by forming carboxy phosphate which reacts with ammonia to form carbamoyl phosphate. The protein is Carbamoyl phosphate synthase large chain of Ligilactobacillus salivarius (strain UCC118) (Lactobacillus salivarius).